A 67-amino-acid chain; its full sequence is Large ribosomal subunit protein bL32 (67 aa).

The segment covering Met1 to Trp20 has biased composition (basic residues). The segment at Met1–Ala24 is disordered.

The protein belongs to the bacterial ribosomal protein bL32 family.

In Renibacterium salmoninarum (strain ATCC 33209 / DSM 20767 / JCM 11484 / NBRC 15589 / NCIMB 2235), this protein is Large ribosomal subunit protein bL32.